Reading from the N-terminus, the 735-residue chain is 1,4-alpha-glucan branching enzyme GlgB (735 aa).

Catalysis depends on D414, which acts as the Nucleophile. Catalysis depends on E469, which acts as the Proton donor.

Belongs to the glycosyl hydrolase 13 family. GlgB subfamily. Monomer.

It catalyses the reaction Transfers a segment of a (1-&gt;4)-alpha-D-glucan chain to a primary hydroxy group in a similar glucan chain.. It participates in glycan biosynthesis; glycogen biosynthesis. Catalyzes the formation of the alpha-1,6-glucosidic linkages in glycogen by scission of a 1,4-alpha-linked oligosaccharide from growing alpha-1,4-glucan chains and the subsequent attachment of the oligosaccharide to the alpha-1,6 position. The sequence is that of 1,4-alpha-glucan branching enzyme GlgB from Burkholderia lata (strain ATCC 17760 / DSM 23089 / LMG 22485 / NCIMB 9086 / R18194 / 383).